The sequence spans 623 residues: Kelch repeat and BTB domain-containing protein 12 (623 aa).

Positions threonine 25–alanine 92 constitute a BTB domain. One can recognise a BACK domain in the interval cysteine 127 to lysine 236. 4 Kelch repeats span residues asparagine 390–glycine 440, arginine 441–glycine 496, isoleucine 498–alanine 551, and lysine 557–asparagine 607.

The polypeptide is Kelch repeat and BTB domain-containing protein 12 (kbtbd12) (Danio rerio (Zebrafish)).